Reading from the N-terminus, the 442-residue chain is Glutamate-1-semialdehyde 2,1-aminomutase (442 aa).

Lysine 282 carries the post-translational modification N6-(pyridoxal phosphate)lysine.

It belongs to the class-III pyridoxal-phosphate-dependent aminotransferase family. HemL subfamily. Homodimer. It depends on pyridoxal 5'-phosphate as a cofactor.

Its subcellular location is the cytoplasm. The catalysed reaction is (S)-4-amino-5-oxopentanoate = 5-aminolevulinate. Its pathway is porphyrin-containing compound metabolism; protoporphyrin-IX biosynthesis; 5-aminolevulinate from L-glutamyl-tRNA(Glu): step 2/2. This is Glutamate-1-semialdehyde 2,1-aminomutase from Polaromonas naphthalenivorans (strain CJ2).